A 614-amino-acid polypeptide reads, in one-letter code: Vitamin B12 transporter BtuB (614 aa).

The N-terminal stretch at Met1–Ala20 is a signal peptide. The TonB box motif lies at Asp26–Asn33. A TBDR plug domain is found at Pro38–Thr152. Cyanocob(III)alamin-binding positions include Leu83, Ser85, Asn92, and Val110 to Ser111. In terms of domain architecture, TBDR beta-barrel spans Glu155–Phe614. A run of 3 beta stranded transmembrane segments spans residues Thr158–Gly165, Tyr169–Gln178, and Thr184–Thr195. The Ca(2+) site is built by Asp199, Gln211, Asp213, and Asp215. 2 beta stranded membrane-spanning segments follow: residues Phe217 to Glu227 and Asp232 to Asn248. Tyr249 and Asp250 together coordinate Ca(2+). Ala251 is a cyanocob(III)alamin binding site. Asp261 is a binding site for Ca(2+). Beta stranded transmembrane passes span Arg263–Asn277, Glu279–Asn296, Thr309–Ile325, His328–Trp337, Tyr353–Gly369, Phe371–Asp381, Phe385–Ile400, Tyr403–Asn417, Lys434–Glu443, Val449–Asn458, Tyr473–Phe490, Pro494–Ala509, Arg517–Trp529, and Asp535–Asp550. Thr309 is a binding site for cyanocob(III)alamin. Cyanocob(III)alamin is bound at residue Arg517. Position 551 (Tyr551) interacts with cyanocob(III)alamin. A run of 3 beta stranded transmembrane segments spans residues Thr558–Ala572, Ile585–Val596, and Ala602–Phe614. The TonB C-terminal box signature appears at Tyr597 to Phe614.

Belongs to the TonB-dependent receptor family. BtuB (TC 1.B.14.3.1) subfamily.

The protein localises to the cell outer membrane. In terms of biological role, involved in the active translocation of vitamin B12 (cyanocobalamin) across the outer membrane to the periplasmic space. It derives its energy for transport by interacting with the trans-periplasmic membrane protein TonB. This is Vitamin B12 transporter BtuB from Escherichia coli O9:H4 (strain HS).